Here is a 201-residue protein sequence, read N- to C-terminus: uncharacterized protein (201 aa).

In terms of biological role, may have a role in tissue tropism within the insect larvae. This is an uncharacterized protein from Lepidoptera (butterflies and moths).